The chain runs to 198 residues: Na(+)-translocating NADH-quinone reductase subunit E (198 aa).

6 helical membrane-spanning segments follow: residues 11–31 (AVFV…FLAV), 35–55 (VSTA…SVPA), 77–97 (FLNF…LEMI), 109–129 (LGIF…VSFM), 140–160 (IVYG…LAGI), and 176–196 (LGIT…FSGV).

This sequence belongs to the NqrDE/RnfAE family. In terms of assembly, composed of six subunits; NqrA, NqrB, NqrC, NqrD, NqrE and NqrF.

It is found in the cell inner membrane. It carries out the reaction a ubiquinone + n Na(+)(in) + NADH + H(+) = a ubiquinol + n Na(+)(out) + NAD(+). Functionally, NQR complex catalyzes the reduction of ubiquinone-1 to ubiquinol by two successive reactions, coupled with the transport of Na(+) ions from the cytoplasm to the periplasm. NqrA to NqrE are probably involved in the second step, the conversion of ubisemiquinone to ubiquinol. This chain is Na(+)-translocating NADH-quinone reductase subunit E, found in Yersinia enterocolitica serotype O:8 / biotype 1B (strain NCTC 13174 / 8081).